Consider the following 83-residue polypeptide: Cytochrome b559 subunit alpha (83 aa).

Residues 21–35 (VIHSITIPSLFIAGW) traverse the membrane as a helical segment. His-23 contacts heme.

It belongs to the PsbE/PsbF family. As to quaternary structure, heterodimer of an alpha subunit and a beta subunit. PSII is composed of 1 copy each of membrane proteins PsbA, PsbB, PsbC, PsbD, PsbE, PsbF, PsbH, PsbI, PsbJ, PsbK, PsbL, PsbM, PsbT, PsbX, PsbY, PsbZ, Psb30/Ycf12, at least 3 peripheral proteins of the oxygen-evolving complex and a large number of cofactors. It forms dimeric complexes. The cofactor is heme b.

It is found in the plastid. Its subcellular location is the chloroplast thylakoid membrane. This b-type cytochrome is tightly associated with the reaction center of photosystem II (PSII). PSII is a light-driven water:plastoquinone oxidoreductase that uses light energy to abstract electrons from H(2)O, generating O(2) and a proton gradient subsequently used for ATP formation. It consists of a core antenna complex that captures photons, and an electron transfer chain that converts photonic excitation into a charge separation. This chain is Cytochrome b559 subunit alpha, found in Marchantia polymorpha (Common liverwort).